The following is a 174-amino-acid chain: 2-oxo-4-hydroxy-4-carboxy-5-ureidoimidazoline decarboxylase (174 aa).

Residue H67 is the Proton donor of the active site. Residues P68, 84 to 88 (SQEEQ), and 119 to 123 (FVICA) each bind substrate. The Microbody targeting signal signature appears at 172–174 (TKL).

This sequence belongs to the OHCU decarboxylase family. In terms of assembly, homodimer.

The protein localises to the peroxisome. It carries out the reaction 5-hydroxy-2-oxo-4-ureido-2,5-dihydro-1H-imidazole-5-carboxylate + H(+) = (S)-allantoin + CO2. It participates in purine metabolism; urate degradation; (S)-allantoin from urate: step 3/3. In terms of biological role, catalyzes the stereoselective decarboxylation of 2-oxo-4-hydroxy-4-carboxy-5-ureidoimidazoline (OHCU) to (S)-allantoin. The protein is 2-oxo-4-hydroxy-4-carboxy-5-ureidoimidazoline decarboxylase (urad) of Danio rerio (Zebrafish).